Here is a 387-residue protein sequence, read N- to C-terminus: 8-amino-7-oxononanoate synthase (387 aa).

Residue 109–110 (GY) coordinates pyridoxal 5'-phosphate. Position 134 (H134) interacts with substrate. Pyridoxal 5'-phosphate is bound by residues S182, H214, and T242. The residue at position 245 (K245) is an N6-(pyridoxal phosphate)lysine. Residue T359 coordinates substrate.

This sequence belongs to the class-II pyridoxal-phosphate-dependent aminotransferase family. BioF subfamily. In terms of assembly, homodimer. The cofactor is pyridoxal 5'-phosphate.

The catalysed reaction is 6-carboxyhexanoyl-[ACP] + L-alanine + H(+) = (8S)-8-amino-7-oxononanoate + holo-[ACP] + CO2. The protein operates within cofactor biosynthesis; biotin biosynthesis. Catalyzes the decarboxylative condensation of pimeloyl-[acyl-carrier protein] and L-alanine to produce 8-amino-7-oxononanoate (AON), [acyl-carrier protein], and carbon dioxide. This Haemophilus ducreyi (strain 35000HP / ATCC 700724) protein is 8-amino-7-oxononanoate synthase.